The chain runs to 358 residues: 3-dehydroquinate synthase (358 aa).

NAD(+) contacts are provided by residues 70 to 75, 104 to 108, 128 to 129, K141, K150, and 168 to 171; these read DGEQFK, GVIGD, TT, and CLHT. Positions 183, 246, and 263 each coordinate Zn(2+).

It belongs to the sugar phosphate cyclases superfamily. Dehydroquinate synthase family. Co(2+) serves as cofactor. Zn(2+) is required as a cofactor. The cofactor is NAD(+).

It is found in the cytoplasm. The enzyme catalyses 7-phospho-2-dehydro-3-deoxy-D-arabino-heptonate = 3-dehydroquinate + phosphate. It functions in the pathway metabolic intermediate biosynthesis; chorismate biosynthesis; chorismate from D-erythrose 4-phosphate and phosphoenolpyruvate: step 2/7. Functionally, catalyzes the conversion of 3-deoxy-D-arabino-heptulosonate 7-phosphate (DAHP) to dehydroquinate (DHQ). This Shewanella baltica (strain OS185) protein is 3-dehydroquinate synthase.